Here is a 474-residue protein sequence, read N- to C-terminus: Pyruvate kinase (474 aa).

Arg32 is a substrate binding site. Residues Asn34, Ser36, and Asp66 each contribute to the K(+) site. 34-37 (NFSH) provides a ligand contact to ATP. Positions 73 and 155 each coordinate ATP. Residue Glu221 coordinates Mg(2+). Substrate contacts are provided by Gly244, Asp245, and Thr277. Asp245 lines the Mg(2+) pocket.

Belongs to the pyruvate kinase family. In terms of assembly, homotetramer. Mg(2+) is required as a cofactor. K(+) serves as cofactor.

The catalysed reaction is pyruvate + ATP = phosphoenolpyruvate + ADP + H(+). Its pathway is carbohydrate degradation; glycolysis; pyruvate from D-glyceraldehyde 3-phosphate: step 5/5. The sequence is that of Pyruvate kinase (pykF) from Clostridium perfringens (strain 13 / Type A).